The following is an 87-amino-acid chain: Small ribosomal subunit protein bS18 (87 aa).

It belongs to the bacterial ribosomal protein bS18 family. In terms of assembly, part of the 30S ribosomal subunit. Forms a tight heterodimer with protein bS6.

Functionally, binds as a heterodimer with protein bS6 to the central domain of the 16S rRNA, where it helps stabilize the platform of the 30S subunit. In Mesomycoplasma hyopneumoniae (strain 232) (Mycoplasma hyopneumoniae), this protein is Small ribosomal subunit protein bS18.